Reading from the N-terminus, the 479-residue chain is Anaerobic nitric oxide reductase flavorubredoxin (479 aa).

The zinc metallo-hydrolase stretch occupies residues 30-210; sequence LRGSSYNSYL…PFSRLVTPKI (181 aa). Residues His-79, Glu-81, Asp-83, His-147, Asp-166, and His-227 each contribute to the Fe cation site. A Flavodoxin-like domain is found at 254 to 393; it reads ITIFYDTMSN…LCREHGREIA (140 aa). FMN-binding positions include 260-264 and 342-369; these read TMSNN and AFGS…EMSL. The region spanning 423 to 474 is the Rubredoxin-like domain; sequence GPRMQCSVCQWIYDPAKGEPMQDVAPGTPWSEVPDNFLCPECSLGKDVFDEL. Residues Cys-428, Cys-431, Cys-461, and Cys-464 each coordinate Fe cation.

It in the N-terminal section; belongs to the zinc metallo-hydrolase group 3 family. As to quaternary structure, homotetramer. Fe cation is required as a cofactor. FMN serves as cofactor.

Its subcellular location is the cytoplasm. It participates in nitrogen metabolism; nitric oxide reduction. Its function is as follows. Anaerobic nitric oxide reductase; uses NADH to detoxify nitric oxide (NO), protecting several 4Fe-4S NO-sensitive enzymes. Has at least 2 reductase partners, only one of which (NorW, flavorubredoxin reductase) has been identified. NO probably binds to the di-iron center; electrons enter from the NorW at rubredoxin and are transferred sequentially to the FMN center and the di-iron center. Also able to function as an aerobic oxygen reductase. The chain is Anaerobic nitric oxide reductase flavorubredoxin from Escherichia coli O6:H1 (strain CFT073 / ATCC 700928 / UPEC).